The following is a 115-amino-acid chain: U3-lycotoxin-Ls1a (115 aa).

A signal peptide spans 1–20; sequence MKFVLLFGVLLVTLFSYSSA. Residues 21–44 constitute a propeptide that is removed on maturation; the sequence is EMLDDFDQAVEDELLSLIEKEEAR. 4 cysteine pairs are disulfide-bonded: cysteine 48-cysteine 63, cysteine 55-cysteine 72, cysteine 62-cysteine 87, and cysteine 74-cysteine 85.

This sequence belongs to the neurotoxin 19 (CSTX) family. 01 subfamily. In terms of tissue distribution, expressed by the venom gland.

The protein localises to the secreted. This Lycosa singoriensis (Wolf spider) protein is U3-lycotoxin-Ls1a.